The primary structure comprises 162 residues: General odorant-binding protein 2 (162 aa).

The signal sequence occupies residues 1–18 (MTSKSCLLLVAMVTLTTS). 3 disulfides stabilise this stretch: Cys40–Cys75, Cys71–Cys129, and Cys118–Cys138.

This sequence belongs to the PBP/GOBP family. In terms of tissue distribution, antenna.

Its function is as follows. Present in the aqueous fluid surrounding olfactory sensory dendrites and are thought to aid in the capture and transport of hydrophobic odorants into and through this fluid. In Heliothis virescens (Tobacco budworm moth), this protein is General odorant-binding protein 2.